A 446-amino-acid chain; its full sequence is BAG family molecular chaperone regulator 7 (446 aa).

Residues 230–252 (TGGEKKKKHEEKEKKEKIETKSK) form a disordered region. Over residues 239–250 (EEKEKKEKIETK) the composition is skewed to basic and acidic residues. Residues 303-332 (PEYAAVMIQRAFKAYLIRRSKSLRALRDLA) form the IQ domain. The BAG domain maps to 330 to 407 (DLAIAKTKLK…AMLDVVDPQP (78 aa)). Residue Thr-443 is modified to Phosphothreonine.

In terms of assembly, binds to the ATPase domain of HSP70/HSC70 chaperones. Interacts with HSP70-11/BIP2.

The protein resides in the endoplasmic reticulum. Its function is as follows. Co-chaperone that regulates diverse cellular pathways, such as programmed cell death and stress responses. Necessary for the proper maintenance of the unfolded protein response (UPR) during heat and cold tolerance. This Arabidopsis thaliana (Mouse-ear cress) protein is BAG family molecular chaperone regulator 7 (BAG7).